We begin with the raw amino-acid sequence, 148 residues long: UPF0260 protein KPK_1978 (148 aa).

The protein belongs to the UPF0260 family.

In Klebsiella pneumoniae (strain 342), this protein is UPF0260 protein KPK_1978.